The chain runs to 136 residues: ATP synthase F(0) complex subunit C1, mitochondrial (136 aa).

The N-terminal 61 residues, 1 to 61 (MQTTKALLIS…REFQTSVISR (61 aa)), are a transit peptide targeting the mitochondrion. The chain crosses the membrane as a helical span at residues 77–97 (VGVAGSGAGIGTVFGSLIIGY). Lys104 is subject to N6,N6,N6-trimethyllysine. The chain crosses the membrane as a helical span at residues 112-132 (ILGFALSEAMGLFCLMVAFLI).

Belongs to the ATPase C chain family. As to quaternary structure, homooctamer; the c-ring consists of eight c subunits forming a circle, and each subunit adopts a hairpin shape. Component of the ATP synthase complex composed at least of ATP5F1A/subunit alpha, ATP5F1B/subunit beta, ATP5MC1/subunit c (homooctomer), MT-ATP6/subunit a, MT-ATP8/subunit 8, ATP5ME/subunit e, ATP5MF/subunit f, ATP5MG/subunit g, ATP5MK/subunit k, ATP5MJ/subunit j, ATP5F1C/subunit gamma, ATP5F1D/subunit delta, ATP5F1E/subunit epsilon, ATP5PF/subunit F6, ATP5PB/subunit b, ATP5PD/subunit d, ATP5PO/subunit OSCP. ATP synthase complex consists of a soluble F(1) head domain (subunits alpha(3) and beta(3)) - the catalytic core - and a membrane F(0) domain - the membrane proton channel (subunits c, a, 8, e, f, g, k and j). These two domains are linked by a central stalk (subunits gamma, delta, and epsilon) rotating inside the F1 region and a stationary peripheral stalk (subunits F6, b, d, and OSCP). Interacts with TMEM70 (homooligomer form); this interaction facilitates the oligomer formation of subunit c/ATP5MC1 (c-ring) and the c-ring membrane insertion and also protects ATP5MC1 against intramitochondrial proteolysis. Trimethylated by ATPSCKMT at Lys-104. Methylation is required for proper incorporation of the C subunit into the ATP synthase complex and mitochondrial respiration.

It is found in the mitochondrion membrane. It carries out the reaction H(+)(in) = H(+)(out). In terms of biological role, subunit c, of the mitochondrial membrane ATP synthase complex (F(1)F(0) ATP synthase or Complex V) that produces ATP from ADP in the presence of a proton gradient across the membrane which is generated by electron transport complexes of the respiratory chain. ATP synthase complex consist of a soluble F(1) head domain - the catalytic core - and a membrane F(1) domain - the membrane proton channel. These two domains are linked by a central stalk rotating inside the F(1) region and a stationary peripheral stalk. During catalysis, ATP synthesis in the catalytic domain of F(1) is coupled via a rotary mechanism of the central stalk subunits to proton translocation. With the subunit a (MT-ATP6), forms the proton-conducting channel in the F(0) domain, that contains two crucial half-channels (inlet and outlet) that facilitate proton movement from the mitochondrial intermembrane space (IMS) into the matrix. Protons are taken up via the inlet half-channel and released through the outlet half-channel, following a Grotthuss mechanism. The chain is ATP synthase F(0) complex subunit C1, mitochondrial from Rattus norvegicus (Rat).